Consider the following 1004-residue polypeptide: E3 ubiquitin-protein ligase NEDD4-like (1004 aa).

One can recognise a C2 domain in the interval 30–154 (LASHHSRGLE…TEDPTMERPY (125 aa)). Disordered regions lie at residues 207 to 230 (SNDSASQHQEELPPPPLPPGWEEK) and 272 to 407 (AAHR…TPSV). Residues 221 to 254 (PPLPPGWEEKVDNLGRTYYVNHNNRSTQWHRPSL) form the WW 1 domain. Residue Ser-341 is modified to Phosphoserine. Phosphothreonine is present on Thr-347. Polar residues-rich tracts occupy residues 347–359 (TPDSNGEQFSSLI) and 366–376 (RLRSCSVTDTV). Position 371 is a phosphoserine; by WNK1 and WNK4 (Ser-371). Position 396 is a phosphothreonine; by SGK1 (Thr-396). One can recognise a WW 2 domain in the interval 414–447 (PGLPSGWEERKDAKGRTYYVNHNNRTTTWTRPIM). A disordered region spans residues 453–523 (GASGSATNSN…YNSPKPQHKV (71 aa)). Ser-475 carries the phosphoserine modification. The residue at position 477 (Ser-477) is a Phosphoserine; by SGK1. Residues Ser-478, Ser-493, Ser-504, Ser-508, Ser-512, and Ser-516 each carry the phosphoserine modification. A compositionally biased stretch (basic and acidic residues) spans 489–500 (GAKDSPIRRAVK). 2 consecutive WW domains span residues 526–559 (SFLPPGWEMRIAPNGRPFFIDHNTKTTTWEDPRL) and 577–610 (GPLPPGWEERIHLDGRTFYIDHNSKITQWEDPRL). An HECT domain is found at 669 to 1003 (RPDVLKARLW…VENAQGFEGV (335 aa)). Cys-971 (glycyl thioester intermediate) is an active-site residue.

As to quaternary structure, interacts with UBE2E3. Interacts with NDFIP1; this interaction activates the E3 ubiquitin-protein ligase. Interacts with NDFIP2; this interaction activates the E3 ubiquitin-protein ligase. Interacts (via WW domains) with SCN1A. Interacts (via WW domains) with SCN2A. Interacts (via WW domains) with SCN3A. Interacts (via WW domains) with SCN5A. Interacts (via WW domains) with SCN8A. Interacts (via WW domains) with SCN9A. Interacts (via WW domains) with SCN10A. Interacts (via WW domains) with CLCN5. Interacts with SMAD2. Interacts with SMAD3. Interacts with SMAD6. Interacts with SMAD7. The phosphorylated form interacts with 14-3-3 proteins. Interacts with TNK2. Interacts with WNK1. Interacts with SGK1. Interacts (via C2 domain) with NPC2. Interacts with ARRDC4. Interacts with KCNQ1; promotes internalization of KCNQ1. Interacts (via domains WW1, 3 and 4) with USP36; the interaction inhibits ubiquitination of, at least, NTRK1, KCNQ2 and KCNQ3 by NEDD4L. Interacts with PRRG4 (via cytoplasmic domain). Interacts with LDLRAD3; the interaction is direct. Interacts with UBE2D2. Interacts with TTYH2 and TTYH3. In terms of processing, phosphorylated; which impairs interaction with SCNN. Interaction with YWHAH inhibits dephosphorylation. Aldosterone induces Ser-477 phosphorylation by SGK1. Auto-ubiquitinated. Deubiquitinated by USP36, no effect on NEDD4L protein levels. Both proteins interact and regulate each other's ubiquitination levels. In terms of tissue distribution, highly expressed in liver and kidney. Also expressed in heart, brain and lung. Isoform 1 is expressed in kidney, lung and gut. Isoform 3 is ubiquitously expressed.

The protein localises to the cytoplasm. It is found in the golgi apparatus. Its subcellular location is the endosome. The protein resides in the multivesicular body. The catalysed reaction is S-ubiquitinyl-[E2 ubiquitin-conjugating enzyme]-L-cysteine + [acceptor protein]-L-lysine = [E2 ubiquitin-conjugating enzyme]-L-cysteine + N(6)-ubiquitinyl-[acceptor protein]-L-lysine.. The enzyme catalyses [E2 ubiquitin-conjugating enzyme]-S-ubiquitinyl-L-cysteine + [acceptor protein]-L-cysteine = [E2 ubiquitin-conjugating enzyme]-L-cysteine + [acceptor protein]-S-ubiquitinyl-L-cysteine.. The protein operates within protein modification; protein ubiquitination. With respect to regulation, activated by NDFIP1- and NDFIP2-binding. Functionally, E3 ubiquitin-protein ligase that mediates the polyubiquitination of lysine and cysteine residues on target proteins and is thereby implicated in the regulation of various signaling pathways including autophagy, innate immunity or DNA repair. Inhibits TGF-beta signaling by triggering SMAD2 and TGFBR1 ubiquitination and proteasome-dependent degradation. Downregulates autophagy and cell growth by ubiquitinating and reducing cellular ULK1 or ASCT2 levels. Promotes ubiquitination and internalization of various plasma membrane channels such as ENaC, SCN2A/Nav1.2, SCN3A/Nav1.3, SCN5A/Nav1.5, SCN9A/Nav1.7, SCN10A/Nav1.8, KCNA3/Kv1.3, KCNH2, EAAT1, KCNQ2/Kv7.2, KCNQ3/Kv7.3 or CLC5. Promotes ubiquitination and degradation of SGK1 and TNK2. Ubiquitinates BRAT1 and this ubiquitination is enhanced in the presence of NDFIP1. Plays a role in dendrite formation by melanocytes. Involved in the regulation of TOR signaling. Ubiquitinates and regulates protein levels of NTRK1 once this one is activated by NGF. Plays a role in antiviral innate immunity by catalyzing 'Lys-29'-linked cysteine ubiquitination of TRAF3, resulting in enhanced 'Lys-48' and 'Lys-63'-linked ubiquitination of TRAF3. Ubiquitinates TTYH2 and TYYH3 and regulates protein levels of TTYH2. The protein is E3 ubiquitin-protein ligase NEDD4-like (Nedd4l) of Mus musculus (Mouse).